A 259-amino-acid polypeptide reads, in one-letter code: Ribosomal RNA small subunit methyltransferase A (259 aa).

6 residues coordinate S-adenosyl-L-methionine: N13, L15, G40, E61, D85, and N103.

Belongs to the class I-like SAM-binding methyltransferase superfamily. rRNA adenine N(6)-methyltransferase family. RsmA subfamily.

Its subcellular location is the cytoplasm. It carries out the reaction adenosine(1518)/adenosine(1519) in 16S rRNA + 4 S-adenosyl-L-methionine = N(6)-dimethyladenosine(1518)/N(6)-dimethyladenosine(1519) in 16S rRNA + 4 S-adenosyl-L-homocysteine + 4 H(+). In terms of biological role, specifically dimethylates two adjacent adenosines (A1518 and A1519) in the loop of a conserved hairpin near the 3'-end of 16S rRNA in the 30S particle. May play a critical role in biogenesis of 30S subunits. The sequence is that of Ribosomal RNA small subunit methyltransferase A from Neisseria meningitidis serogroup C / serotype 2a (strain ATCC 700532 / DSM 15464 / FAM18).